Here is a 600-residue protein sequence, read N- to C-terminus: Elongation factor 4 (600 aa).

The region spanning 4-187 (KYIRNFSIVA…AIIEQIPPPL (184 aa)) is the tr-type G domain. GTP contacts are provided by residues 16-21 (DHGKST) and 134-137 (NKID).

It belongs to the TRAFAC class translation factor GTPase superfamily. Classic translation factor GTPase family. LepA subfamily.

Its subcellular location is the cell membrane. The enzyme catalyses GTP + H2O = GDP + phosphate + H(+). Its function is as follows. Required for accurate and efficient protein synthesis under certain stress conditions. May act as a fidelity factor of the translation reaction, by catalyzing a one-codon backward translocation of tRNAs on improperly translocated ribosomes. Back-translocation proceeds from a post-translocation (POST) complex to a pre-translocation (PRE) complex, thus giving elongation factor G a second chance to translocate the tRNAs correctly. Binds to ribosomes in a GTP-dependent manner. The protein is Elongation factor 4 of Malacoplasma penetrans (strain HF-2) (Mycoplasma penetrans).